Reading from the N-terminus, the 86-residue chain is Protein U17 (86 aa).

This chain is Protein U17 (U17/U16), found in Homo sapiens (Human).